The chain runs to 183 residues: Ferredoxin-2, mitochondrial (183 aa).

A mitochondrion-targeting transit peptide spans 1–52; it reads MAASVAWGGVNAGFLLRAARGAWWSRPGGFWGSGEAAAPAIARKFRATGSRP. In terms of domain architecture, 2Fe-2S ferredoxin-type spans 68–170; it reads VNVVFVDRSG…GAEFTLPKIT (103 aa). 4 residues coordinate [2Fe-2S] cluster: Cys105, Cys111, Cys114, and Cys151.

Belongs to the adrenodoxin/putidaredoxin family. Component of the mitochondrial core iron-sulfur cluster (ISC) complex composed of NFS1, LYRM4, NDUFAB1, ISCU, FXN, and FDX2; this complex is a heterohexamer containing two copies of each monomer. Form a heterodimer complex with NFS1. Interacts (in both their reduced and oxidized states) with the cysteine desulfurase (NFS1:LYRM4) complex; this interaction stimulates cysteine desulfurase activity, and serves as a reductant for Fe-S cluster assembly. The cofactor is [2Fe-2S] cluster.

It is found in the mitochondrion. Its subcellular location is the mitochondrion matrix. In terms of biological role, electron donor, of the core iron-sulfur cluster (ISC) assembly complex, that acts to reduce the persulfide into sulfide during [2Fe-2S] clusters assembly on the scaffolding protein ISCU. The core iron-sulfur cluster (ISC) assembly complex is involved in the de novo synthesis of a [2Fe-2S] cluster, the first step of the mitochondrial iron-sulfur protein biogenesis. This process is initiated by the cysteine desulfurase complex (NFS1:LYRM4:NDUFAB1) that produces persulfide which is delivered on the scaffold protein ISCU in a FXN-dependent manner. Then this complex is stabilized by FDX2 which provides reducing equivalents to accomplish the [2Fe-2S] cluster assembly. Finally, the [2Fe-2S] cluster is transferred from ISCU to chaperone proteins, including HSCB, HSPA9 and GLRX5. Essential for coenzyme Q biosynthesis: together with FDXR, transfers the electrons required for the hydroxylation reaction performed by COQ6. This chain is Ferredoxin-2, mitochondrial, found in Bos taurus (Bovine).